A 249-amino-acid polypeptide reads, in one-letter code: Transmembrane protein 51 (249 aa).

2 helical membrane passes run 17 to 37 and 64 to 84; these read IGLG…VPGF and VAYV…CLSI. 3 disordered regions span residues 95–126, 161–199, and 213–249; these read ELAR…SRYY, TGLD…PLKV, and RITL…RPPD. The span at 99-108 shows a compositional bias: polar residues; it reads IQQQAGTVPH. Ser-109, Ser-114, Ser-178, and Ser-188 each carry phosphoserine. Positions 167-178 are enriched in polar residues; that stretch reads TPTSTRAETETS. The span at 190–199 shows a compositional bias: basic residues; that stretch reads LAKRLKPLKV. A compositionally biased stretch (pro residues) spans 220-234; sequence NVPPPSIEPLTPPPL.

The protein resides in the membrane. In Mus musculus (Mouse), this protein is Transmembrane protein 51 (Tmem51).